The following is a 286-amino-acid chain: Phosphate import ATP-binding protein PstB (286 aa).

The ABC transporter domain occupies 40-281; that stretch reads VVARDFSIYY…PKDSMTEDYI (242 aa). Residue 72–79 participates in ATP binding; it reads GPSGCGKS.

It belongs to the ABC transporter superfamily. Phosphate importer (TC 3.A.1.7) family. As to quaternary structure, the complex is composed of two ATP-binding proteins (PstB), two transmembrane proteins (PstC and PstA) and a solute-binding protein (PstS).

Its subcellular location is the cell inner membrane. The enzyme catalyses phosphate(out) + ATP + H2O = ADP + 2 phosphate(in) + H(+). In terms of biological role, part of the ABC transporter complex PstSACB involved in phosphate import. Responsible for energy coupling to the transport system. The chain is Phosphate import ATP-binding protein PstB from Chlorobaculum tepidum (strain ATCC 49652 / DSM 12025 / NBRC 103806 / TLS) (Chlorobium tepidum).